The primary structure comprises 372 residues: Peptide chain release factor 2 (372 aa).

Position 253 is an N5-methylglutamine (Gln-253).

This sequence belongs to the prokaryotic/mitochondrial release factor family. Methylated by PrmC. Methylation increases the termination efficiency of RF2.

Its subcellular location is the cytoplasm. Its function is as follows. Peptide chain release factor 2 directs the termination of translation in response to the peptide chain termination codons UGA and UAA. This Nocardia farcinica (strain IFM 10152) protein is Peptide chain release factor 2.